The sequence spans 220 residues: Adapter protein MecA (220 aa).

This sequence belongs to the MecA family. In terms of assembly, homodimer.

In terms of biological role, enables the recognition and targeting of unfolded and aggregated proteins to the ClpC protease or to other proteins involved in proteolysis. The polypeptide is Adapter protein MecA (Enterococcus faecalis (strain ATCC 700802 / V583)).